Reading from the N-terminus, the 432-residue chain is Adenylosuccinate synthetase (432 aa).

Residues 13-19 (GDEGKGK) and 41-43 (GHT) each bind GTP. The active-site Proton acceptor is the aspartate 14. Residues aspartate 14 and glycine 41 each coordinate Mg(2+). IMP contacts are provided by residues 14–17 (DEGK), 39–42 (NAGH), threonine 131, arginine 145, glutamine 226, threonine 241, and arginine 305. The active-site Proton donor is the histidine 42. 301–307 (SVTGRAR) is a substrate binding site. GTP is bound by residues arginine 307, 333–335 (KLD), and 416–418 (STG).

The protein belongs to the adenylosuccinate synthetase family. As to quaternary structure, homodimer. Mg(2+) is required as a cofactor.

The protein resides in the cytoplasm. It catalyses the reaction IMP + L-aspartate + GTP = N(6)-(1,2-dicarboxyethyl)-AMP + GDP + phosphate + 2 H(+). It functions in the pathway purine metabolism; AMP biosynthesis via de novo pathway; AMP from IMP: step 1/2. In terms of biological role, plays an important role in the de novo pathway of purine nucleotide biosynthesis. Catalyzes the first committed step in the biosynthesis of AMP from IMP. The polypeptide is Adenylosuccinate synthetase (Neisseria meningitidis serogroup A / serotype 4A (strain DSM 15465 / Z2491)).